The following is a 3312-amino-acid chain: Cadherin EGF LAG seven-pass G-type receptor 3 (3312 aa).

Residues 1–32 (MMARRPPWRGLGGRSTPILLLLLLSLFPLSQE) form the signal peptide. Residues 33-2540 (ELGGGGHQGW…RLEGDLELLA (2508 aa)) lie on the Extracellular side of the membrane. 3 disordered regions span residues 90–112 (GRRQ…LGIE), 143–199 (GRTG…RKRV), and 212–306 (GSKG…EARK). Residues 159-173 (SSGVPGSGNSSPLPS) are compositionally biased toward low complexity. Residues 290-299 (RPGPRPPGLP) are compositionally biased toward pro residues. Cadherin domains are found at residues 326–433 (PQYN…SPVF), 434–545 (EQAQ…APQF), 546–651 (SEKR…IPIF), 652–756 (VSTP…RPEF), 757–858 (TMKE…RPVF), 859–961 (QSAH…APQF), 962–1067 (VASH…APVF), 1068–1169 (PAEE…SPVL), and 1170–1265 (NNFQ…RVVI). Asparagine 632 carries an N-linked (GlcNAc...) asparagine glycan. The N-linked (GlcNAc...) asparagine glycan is linked to asparagine 847. N-linked (GlcNAc...) asparagine glycosylation is found at asparagine 1182, asparagine 1222, asparagine 1317, and asparagine 1327. The region spanning 1375 to 1433 (DDNVCLREPCENYMKCVSVLRFDSSAPFLASASTLFRPIQPIAGLRCRCPPGFTGDFCE) is the EGF-like 1; calcium-binding domain. 9 disulfide bridges follow: cysteine 1379–cysteine 1390, cysteine 1384–cysteine 1421, cysteine 1423–cysteine 1432, cysteine 1439–cysteine 1450, cysteine 1444–cysteine 1459, cysteine 1461–cysteine 1470, cysteine 1479–cysteine 1490, cysteine 1484–cysteine 1500, and cysteine 1502–cysteine 1513. Residues 1435-1471 (ELDLCYSNPCRNGGACARREGGYTCVCRPRFTGEDCE) form the EGF-like 2; calcium-binding domain. The 40-residue stretch at 1475–1514 (EAGRCVPGVCRNGGTCTDAPNGGFRCQCPAGGAFEGPRCE) folds into the EGF-like 3; calcium-binding domain. Residues 1515–1719 (VAARSFPPSS…VANNGTMAGC (205 aa)) enclose the Laminin G-like 1 domain. Asparagine 1649 and asparagine 1713 each carry an N-linked (GlcNAc...) asparagine glycan. Intrachain disulfides connect cysteine 1693-cysteine 1719, cysteine 1726-cysteine 1737, cysteine 1731-cysteine 1746, and cysteine 1748-cysteine 1757. Residues 1722 to 1758 (KLHFCDSGPCKNSGFCSERWGSFSCDCPVGFGGKDCQ) enclose the EGF-like 4; calcium-binding domain. Residues 1764–1944 (PHHFRGNGTL…SHRVNAEPGC (181 aa)) enclose the Laminin G-like 2 domain. N-linked (GlcNAc...) asparagine glycosylation occurs at asparagine 1770. 9 cysteine pairs are disulfide-bonded: cysteine 1915-cysteine 1944, cysteine 1950-cysteine 1961, cysteine 1955-cysteine 1970, cysteine 1972-cysteine 1981, cysteine 1985-cysteine 1996, cysteine 1990-cysteine 2008, cysteine 2010-cysteine 2019, cysteine 2027-cysteine 2040, and cysteine 2042-cysteine 2052. Residues 1946 to 1982 (VTNACASGPCPPHADCRDLWQTFSCTCQPGYYGPGCV) enclose the EGF-like 5; calcium-binding domain. Aspartate 1963 carries the post-translational modification (3R)-3-hydroxyaspartate. The region spanning 1983–2020 (DACLLNPCQNQGSCRHLPGAPHGYTCDCVGGYFGHHCE) is the EGF-like 6; calcium-binding domain. Residues 2021–2053 (HRMDQQCPRGWWGSPTCGPCNCDVHKGFDPNCN) form the EGF-like 7; calcium-binding domain. Asparagine 2053 is a glycosylation site (N-linked (GlcNAc...) asparagine). Residues 2055-2090 (TNGQCHCKEFHYRPRGSDSCLPCDCYPVGSTSRSCA) form the EGF-like 8; calcium-binding domain. Intrachain disulfides connect cysteine 2059/cysteine 2074, cysteine 2061/cysteine 2077, cysteine 2079/cysteine 2089, cysteine 2098/cysteine 2107, and cysteine 2110/cysteine 2122. Residues 2077-2124 (CDCYPVGSTSRSCAPHSGQCPCRPGALGRQCNSCDSPFAEVTASGCRV) enclose the Laminin EGF-like domain. Tyrosine 2126 carries the phosphotyrosine modification. N-linked (GlcNAc...) asparagine glycosylation is found at asparagine 2177, asparagine 2196, asparagine 2386, asparagine 2474, and asparagine 2506. The interval 2361–2399 (THVLLPSQSPRPSPSEVLPTSSSIENSTTSSVVPPPAPP) is disordered. Positions 2368 to 2530 (QSPRPSPSEV…GVLMDASPRE (163 aa)) constitute a GAIN-B domain. Residues 2380–2391 (TSSSIENSTTSS) are compositionally biased toward low complexity. 2 disulfides stabilise this stretch: cysteine 2480/cysteine 2512 and cysteine 2500/cysteine 2514. The tract at residues 2480–2530 (CVQWDPPGLAEQHGVWTARDCELVHRNGSHARCRCSRTGTFGVLMDASPRE) is GPS. A helical transmembrane segment spans residues 2541–2561 (VFTHVVVAVSVAALVLTAAIL). The Cytoplasmic portion of the chain corresponds to 2562–2572 (LSLRSLKSNVR). A helical membrane pass occupies residues 2573-2593 (GIHANVAAALGVAELLFLLGI). Over 2594–2601 (HRTHNQLV) the chain is Extracellular. The helical transmembrane segment at 2602–2622 (CTAVAILLHYFFLSTFAWLFV) threads the bilayer. Residues 2623–2643 (QGLHLYRMQVEPRNVDRGAMR) are Cytoplasmic-facing. Residues 2644–2664 (FYHALGWGVPAVLLGLAVGLD) form a helical membrane-spanning segment. Residues 2665–2681 (PEGYGNPDFCWISVHEP) lie on the Extracellular side of the membrane. The helical transmembrane segment at 2682–2702 (LIWSFAGPVVLVIVMNGTMFL) threads the bilayer. Residues 2703 to 2725 (LAARTSCSTGQREAKKTSALTLR) lie on the Cytoplasmic side of the membrane. A helical membrane pass occupies residues 2726-2746 (SSFLLLLLVSASWLFGLLAVN). At 2747–2753 (HSILAFH) the chain is on the extracellular side. A helical membrane pass occupies residues 2754-2774 (YLHAGLCGLQGLAVLLLFCVL). The Cytoplasmic segment spans residues 2775 to 3312 (NADARAAWMP…SEVPRSEGHS (538 aa)). Disordered stretches follow at residues 2888–2927 (AGAD…QRPL) and 2978–3006 (TSKD…AQRQ). Over residues 2890-2900 (ADSDSDSDLSL) the composition is skewed to acidic residues. Tyrosine 3051 is modified (phosphotyrosine). 2 disordered regions span residues 3086–3243 (EEAP…TEQL) and 3256–3312 (SALS…EGHS). Residue serine 3097 is modified to Phosphoserine. 3 stretches are compositionally biased toward low complexity: residues 3175 to 3198 (SPQR…SRSS), 3256 to 3265 (SALSSVQSSS), and 3272 to 3281 (TTATPSATAS). Over residues 3287–3300 (TPRSATSHSISELS) the composition is skewed to polar residues.

The protein belongs to the G-protein coupled receptor 2 family. LN-TM7 subfamily.

It localises to the cell membrane. Its function is as follows. Receptor that may have an important role in cell/cell signaling during nervous system formation. In Homo sapiens (Human), this protein is Cadherin EGF LAG seven-pass G-type receptor 3 (CELSR3).